A 243-amino-acid polypeptide reads, in one-letter code: MSTSRAPETTSAAPLSAEQSASLYRLMTWLSPAFPVGAFSYSSGLEWAVEAGDVIDAPSLRDWLTAMLEHGAGFCDGVFLAHAYRAVAAADETALRHVAELATAFVPSAERHLETTAQGKAFIEIVRNAWPSDGLACAVDACAGALAYPVAVGLVSATHGVPLAATLHAFLHAVVSNWISAGARLVPLGQTDSQRVLAALEPAVIAAGDRAREASLDDLGSATFRADLASLRHETQYTRLFRS.

This sequence belongs to the UreF family. As to quaternary structure, ureD, UreF and UreG form a complex that acts as a GTP-hydrolysis-dependent molecular chaperone, activating the urease apoprotein by helping to assemble the nickel containing metallocenter of UreC. The UreE protein probably delivers the nickel.

The protein localises to the cytoplasm. Functionally, required for maturation of urease via the functional incorporation of the urease nickel metallocenter. The chain is Urease accessory protein UreF from Rhodopseudomonas palustris (strain BisB5).